Here is a 687-residue protein sequence, read N- to C-terminus: T-box transcription factor TBX2b (687 aa).

A DNA-binding region (T-box) is located at residues 103–276 (LWDQFHKLGT…NNPFAKGFRD (174 aa)). Disordered regions lie at residues 303–452 (DRDG…ESPS) and 611–687 (NLLT…DSPK). Composition is skewed to basic and acidic residues over residues 338 to 357 (GSRDDKTCTDSEHEMDHQND), 375 to 400 (SRSEDWGREKPIAEKKDDYPDSRKTS), and 408 to 430 (NLEKDKLESRSRKDTDSSKKDTE). Composition is skewed to polar residues over residues 431–451 (NSGISGSKDSFSPLMVQTESP), 611–630 (NLLTTGLPSGLNPSSESSKC), and 644–654 (GASQRNGSPKT). Positions 654-681 (TTMKESINELQNIQRLVSGLESQRETSS) form a coiled coil. A compositionally biased stretch (basic and acidic residues) spans 675–687 (SQRETSSPRDSPK).

In terms of assembly, binds DNA as a monomer. In terms of tissue distribution, expressed in the axial mesoderm, notably, in the notochordal precursor cells immediately before formation of the notochord and in the chordoneural hinge of the tail bud, after the notochord is formed. In addition, its expression is detected in the ventral forebrain, sensory neurons, fin buds and excretory system.

The protein localises to the nucleus. Its function is as follows. Transcription factor which acts as a transcriptional repressor. May also function as a transcriptional activator. Binds to the palindromic T site 5'-TTCACACCTAGGTGTGAA-3' DNA sequence, or a half-site, which are present in the regulatory region of several genes. Involved in the transcriptional regulation of genes required for mesoderm differentiation. Plays a role in the specification of late notochordal precursor cells and formation of the differentiated notochord. Required for cardiac atrioventricular canal formation. The chain is T-box transcription factor TBX2b (tbx2b) from Danio rerio (Zebrafish).